The sequence spans 260 residues: Small ribosomal subunit protein uS3 (260 aa).

In terms of domain architecture, KH type-2 spans 39–114; the sequence is LRQYIEQKLG…QIRINVVEVQ (76 aa). Residues 219–260 form a disordered region; it reads EVAAPPPSTRDRDRDRGDRDREPRRRQQQRRRQQFEDRSNEG. Basic and acidic residues-rich tracts occupy residues 227-243 and 251-260; these read TRDRDRDRGDRDREPRR and QQFEDRSNEG.

Belongs to the universal ribosomal protein uS3 family. In terms of assembly, part of the 30S ribosomal subunit. Forms a tight complex with proteins S10 and S14.

Its function is as follows. Binds the lower part of the 30S subunit head. Binds mRNA in the 70S ribosome, positioning it for translation. The protein is Small ribosomal subunit protein uS3 of Trichormus variabilis (strain ATCC 29413 / PCC 7937) (Anabaena variabilis).